We begin with the raw amino-acid sequence, 134 residues long: Small ribosomal subunit protein uS8 (134 aa).

This sequence belongs to the universal ribosomal protein uS8 family. In terms of assembly, part of the 30S ribosomal subunit. Contacts proteins S5 and S12.

One of the primary rRNA binding proteins, it binds directly to 16S rRNA central domain where it helps coordinate assembly of the platform of the 30S subunit. The sequence is that of Small ribosomal subunit protein uS8 from Thermotoga sp. (strain RQ2).